The chain runs to 55 residues: Spermatid nuclear transition protein 1 (55 aa).

Residues Met1–Lys42 show a composition bias toward basic residues. Residues Met1–Leu55 form a disordered region. A phosphoserine mark is found at Ser36, Ser37, and Ser40.

It belongs to the nuclear transition protein 1 family. Testis.

It is found in the nucleus. Its subcellular location is the chromosome. In terms of biological role, plays a key role in the replacement of histones to protamine in the elongating spermatids of mammals. In condensing spermatids, loaded onto the nucleosomes, where it promotes the recruitment and processing of protamines, which are responsible for histone eviction. The protein is Spermatid nuclear transition protein 1 (Tnp1) of Rattus norvegicus (Rat).